A 366-amino-acid polypeptide reads, in one-letter code: Holliday junction branch migration complex subunit RuvB (366 aa).

The disordered stretch occupies residues 1–49; the sequence is MAIISSKKQPPEPNGQPNKRPESAPAAPKEKVLQPEAAIDEQGKQEESI. The tract at residues 13–210 is large ATPase domain (RuvB-L); the sequence is PNGQPNKRPE…FGLIQKLRFY (198 aa). ATP-binding positions include isoleucine 49, arginine 50, glycine 91, lysine 94, threonine 95, threonine 96, 157–159, arginine 200, tyrosine 210, and arginine 247; that span reads EDY. Threonine 95 provides a ligand contact to Mg(2+). Residues 211–281 form a small ATPAse domain (RuvB-S) region; that stretch reads EVDELSQIVL…IAAEALQLFQ (71 aa). The segment at 284–366 is head domain (RuvB-H); it reads PCGLDWTDRR…TPPNEQLSLL (83 aa). DNA is bound by residues arginine 339 and arginine 344.

This sequence belongs to the RuvB family. As to quaternary structure, homohexamer. Forms an RuvA(8)-RuvB(12)-Holliday junction (HJ) complex. HJ DNA is sandwiched between 2 RuvA tetramers; dsDNA enters through RuvA and exits via RuvB. An RuvB hexamer assembles on each DNA strand where it exits the tetramer. Each RuvB hexamer is contacted by two RuvA subunits (via domain III) on 2 adjacent RuvB subunits; this complex drives branch migration. In the full resolvosome a probable DNA-RuvA(4)-RuvB(12)-RuvC(2) complex forms which resolves the HJ.

It is found in the cytoplasm. The enzyme catalyses ATP + H2O = ADP + phosphate + H(+). In terms of biological role, the RuvA-RuvB-RuvC complex processes Holliday junction (HJ) DNA during genetic recombination and DNA repair, while the RuvA-RuvB complex plays an important role in the rescue of blocked DNA replication forks via replication fork reversal (RFR). RuvA specifically binds to HJ cruciform DNA, conferring on it an open structure. The RuvB hexamer acts as an ATP-dependent pump, pulling dsDNA into and through the RuvAB complex. RuvB forms 2 homohexamers on either side of HJ DNA bound by 1 or 2 RuvA tetramers; 4 subunits per hexamer contact DNA at a time. Coordinated motions by a converter formed by DNA-disengaged RuvB subunits stimulates ATP hydrolysis and nucleotide exchange. Immobilization of the converter enables RuvB to convert the ATP-contained energy into a lever motion, pulling 2 nucleotides of DNA out of the RuvA tetramer per ATP hydrolyzed, thus driving DNA branch migration. The RuvB motors rotate together with the DNA substrate, which together with the progressing nucleotide cycle form the mechanistic basis for DNA recombination by continuous HJ branch migration. Branch migration allows RuvC to scan DNA until it finds its consensus sequence, where it cleaves and resolves cruciform DNA. The polypeptide is Holliday junction branch migration complex subunit RuvB (Trichormus variabilis (strain ATCC 29413 / PCC 7937) (Anabaena variabilis)).